A 91-amino-acid chain; its full sequence is Large ribosomal subunit protein eL43 (91 aa).

The C4-type zinc finger occupies 39-60 (CPFCGKDAMRRGAVGIWNCSKC).

This sequence belongs to the eukaryotic ribosomal protein eL43 family.

The chain is Large ribosomal subunit protein eL43 (rpl-37a) from Ostertagia ostertagi (Brown stomach worm).